Consider the following 259-residue polypeptide: Glucosamine-6-phosphate deaminase (259 aa).

The active-site Proton acceptor; for enolization step is D66. D135 (for ring-opening step) is an active-site residue. The active-site Proton acceptor; for ring-opening step is the H137. E142 functions as the For ring-opening step in the catalytic mechanism.

The protein belongs to the glucosamine/galactosamine-6-phosphate isomerase family. NagB subfamily.

It catalyses the reaction alpha-D-glucosamine 6-phosphate + H2O = beta-D-fructose 6-phosphate + NH4(+). It functions in the pathway amino-sugar metabolism; N-acetylneuraminate degradation; D-fructose 6-phosphate from N-acetylneuraminate: step 5/5. Catalyzes the reversible isomerization-deamination of glucosamine 6-phosphate (GlcN6P) to form fructose 6-phosphate (Fru6P) and ammonium ion. The sequence is that of Glucosamine-6-phosphate deaminase from Rhodococcus jostii (strain RHA1).